Here is a 334-residue protein sequence, read N- to C-terminus: Serine/threonine-protein kinase (334 aa).

Residues 53–333 form the Protein kinase domain; sequence FEVLQPLQSG…DEILNFGMWT (281 aa). Residues 59–67 and K82 contribute to the ATP site; that span reads LQSGSEGRV. The active-site Proton acceptor is D167.

It belongs to the protein kinase superfamily. Ser/Thr protein kinase family.

The enzyme catalyses L-seryl-[protein] + ATP = O-phospho-L-seryl-[protein] + ADP + H(+). It carries out the reaction L-threonyl-[protein] + ATP = O-phospho-L-threonyl-[protein] + ADP + H(+). In terms of biological role, able to phosphorylate in vitro the major virion phosphoprotein phosphorylated in vivo. The protein is Serine/threonine-protein kinase (PK) of Sus scrofa (Pig).